A 514-amino-acid chain; its full sequence is 2,3-bisphosphoglycerate-independent phosphoglycerate mutase (514 aa).

Residues Asp14 and Ser64 each coordinate Mn(2+). Ser64 functions as the Phosphoserine intermediate in the catalytic mechanism. Substrate-binding positions include His125, 155–156 (RD), Arg187, Arg193, 263–266 (RADR), and Lys336. Mn(2+) is bound by residues Asp403, His407, Asp444, His445, and His463.

Belongs to the BPG-independent phosphoglycerate mutase family. As to quaternary structure, monomer. The cofactor is Mn(2+).

The enzyme catalyses (2R)-2-phosphoglycerate = (2R)-3-phosphoglycerate. Its pathway is carbohydrate degradation; glycolysis; pyruvate from D-glyceraldehyde 3-phosphate: step 3/5. Its function is as follows. Catalyzes the interconversion of 2-phosphoglycerate and 3-phosphoglycerate. The protein is 2,3-bisphosphoglycerate-independent phosphoglycerate mutase of Salmonella paratyphi B (strain ATCC BAA-1250 / SPB7).